Consider the following 277-residue polypeptide: Putative phosphoenolpyruvate synthase regulatory protein (277 aa).

Position 157–164 (Gly157–Thr164) interacts with ADP.

The protein belongs to the pyruvate, phosphate/water dikinase regulatory protein family. PSRP subfamily.

The catalysed reaction is [pyruvate, water dikinase] + ADP = [pyruvate, water dikinase]-phosphate + AMP + H(+). The enzyme catalyses [pyruvate, water dikinase]-phosphate + phosphate + H(+) = [pyruvate, water dikinase] + diphosphate. Its function is as follows. Bifunctional serine/threonine kinase and phosphorylase involved in the regulation of the phosphoenolpyruvate synthase (PEPS) by catalyzing its phosphorylation/dephosphorylation. The sequence is that of Putative phosphoenolpyruvate synthase regulatory protein from Klebsiella pneumoniae (strain 342).